We begin with the raw amino-acid sequence, 302 residues long: Protein TILLER ANGLE CONTROL 1 (302 aa).

An IGT motif motif is present at residues Gly-57–Thr-63. Disordered stretches follow at residues Glu-82–Glu-115 and Glu-159–Lys-180. Positions Asp-99 to Glu-115 are enriched in acidic residues. Polar residues predominate over residues Ser-162 to Gln-175.

This sequence belongs to the TAC family. Highly expressed in flower buds. Expressed in branch attachment sites, vegetative buds and young fruits.

Its function is as follows. Involved in the regulation of axillary shoot growth angle. Promotes horizontal shoot growth. This chain is Protein TILLER ANGLE CONTROL 1, found in Prunus persica (Peach).